The sequence spans 173 residues: Microfibrillar-associated protein 5 (173 aa).

Positions 1 to 21 are cleaved as a signal peptide; that stretch reads MSLLGPKVLLFLAAFIITSDW. The Cell attachment site motif lies at 30–32; that stretch reads RGD. O-linked (GalNAc...) threonine glycosylation is present at Thr54. N-linked (GlcNAc...) asparagine glycosylation is present at Asn79.

It belongs to the MFAP family. As to quaternary structure, interacts with TGFB2. Interacts with BMP2. Interacts with FBN1 (via N-terminal domain) and FBN2. In terms of processing, forms intermolecular disulfide bonds either with other MAGP-2 molecules or with other components of the microfibrils. N- and O-glycosylated. O-glycosylated with core 1 or possibly core 8 glycans. O-glycan heterogeneity at Thr-54: HexHexNAc (major) and HexHexNAc + sulfate (minor).

It is found in the secreted. The protein localises to the extracellular space. The protein resides in the extracellular matrix. In terms of biological role, may play a role in hematopoiesis. In the cardiovascular system, could regulate growth factors or participate in cell signaling in maintaining large vessel integrity. Component of the elastin-associated microfibrils. The protein is Microfibrillar-associated protein 5 (MFAP5) of Homo sapiens (Human).